A 165-amino-acid polypeptide reads, in one-letter code: 16S rRNA aminocarboxypropyltransferase (165 aa).

Residues T17, L62, L83, and T102 each contribute to the S-adenosyl-L-methionine site.

It belongs to the TDD superfamily. TSR3 family.

Its subcellular location is the cytoplasm. It carries out the reaction an N(1)-methylpseudouridine in rRNA + S-adenosyl-L-methionine = N(1)-methyl-N(3)-[(3S)-3-amino-3-carboxypropyl]pseudouridine in rRNA + S-methyl-5'-thioadenosine + H(+). Its function is as follows. Aminocarboxypropyltransferase that catalyzes the aminocarboxypropyl transfer on pseudouridine corresponding to position 914 in M.jannaschii 16S rRNA. It constitutes the last step in biosynthesis of the hypermodified N1-methyl-N3-(3-amino-3-carboxypropyl) pseudouridine (m1acp3-Psi). The chain is 16S rRNA aminocarboxypropyltransferase from Halobacterium salinarum (strain ATCC 700922 / JCM 11081 / NRC-1) (Halobacterium halobium).